A 147-amino-acid polypeptide reads, in one-letter code: MVHLTGEEKSAVTALWGKVNVDEVGGEALGRLLVVYPWTQRFFESFGDLSTPDAVMNNPKVKAHGKKVLGAFSDGLTHLDNLKGTFAHLSELHCDKLHVDPENFRLLGNVLVCVLAHHFGKEFTPVVQAAYQKVVAGVANALAHKYH.

At Val-2 the chain carries N-acetylvaline. The Globin domain maps to His-3 to His-147. Thr-13 bears the Phosphothreonine mark. The residue at position 45 (Ser-45) is a Phosphoserine. Lys-60 bears the N6-acetyllysine mark. His-64 is a heme b binding site. Lys-83 is subject to N6-acetyllysine. His-93 provides a ligand contact to heme b. The residue at position 94 (Cys-94) is an S-nitrosocysteine. Lys-145 is modified (N6-acetyllysine).

It belongs to the globin family. In terms of assembly, heterotetramer of two alpha chains and two beta chains. As to expression, red blood cells.

In terms of biological role, involved in oxygen transport from the lung to the various peripheral tissues. This is Hemoglobin subunit beta (HBB) from Callithrix jacchus (White-tufted-ear marmoset).